We begin with the raw amino-acid sequence, 189 residues long: ATP-dependent protease subunit HslV (189 aa).

Residue T12 is part of the active site. Na(+) contacts are provided by A172, C175, and T178.

The protein belongs to the peptidase T1B family. HslV subfamily. As to quaternary structure, a double ring-shaped homohexamer of HslV is capped on each side by a ring-shaped HslU homohexamer. The assembly of the HslU/HslV complex is dependent on binding of ATP.

The protein resides in the cytoplasm. The catalysed reaction is ATP-dependent cleavage of peptide bonds with broad specificity.. With respect to regulation, allosterically activated by HslU binding. Protease subunit of a proteasome-like degradation complex believed to be a general protein degrading machinery. The polypeptide is ATP-dependent protease subunit HslV (Ehrlichia ruminantium (strain Welgevonden)).